Here is a 156-residue protein sequence, read N- to C-terminus: ATP synthase subunit b (156 aa).

A helical membrane pass occupies residues 7 to 27; the sequence is LIGQTVAFIIFVWFCMKFVWP.

Belongs to the ATPase B chain family. F-type ATPases have 2 components, F(1) - the catalytic core - and F(0) - the membrane proton channel. F(1) has five subunits: alpha(3), beta(3), gamma(1), delta(1), epsilon(1). F(0) has three main subunits: a(1), b(2) and c(10-14). The alpha and beta chains form an alternating ring which encloses part of the gamma chain. F(1) is attached to F(0) by a central stalk formed by the gamma and epsilon chains, while a peripheral stalk is formed by the delta and b chains.

The protein resides in the cell inner membrane. Its function is as follows. F(1)F(0) ATP synthase produces ATP from ADP in the presence of a proton or sodium gradient. F-type ATPases consist of two structural domains, F(1) containing the extramembraneous catalytic core and F(0) containing the membrane proton channel, linked together by a central stalk and a peripheral stalk. During catalysis, ATP synthesis in the catalytic domain of F(1) is coupled via a rotary mechanism of the central stalk subunits to proton translocation. In terms of biological role, component of the F(0) channel, it forms part of the peripheral stalk, linking F(1) to F(0). This chain is ATP synthase subunit b, found in Shewanella baltica (strain OS185).